The chain runs to 434 residues: Histidinol dehydrogenase (434 aa).

NAD(+) contacts are provided by tyrosine 130, glutamine 188, and asparagine 211. The substrate site is built by serine 237, glutamine 259, and histidine 262. Glutamine 259 and histidine 262 together coordinate Zn(2+). Catalysis depends on proton acceptor residues glutamate 326 and histidine 327. Residues histidine 327, aspartate 360, glutamate 414, and histidine 419 each contribute to the substrate site. Aspartate 360 is a binding site for Zn(2+). Histidine 419 is a Zn(2+) binding site.

The protein belongs to the histidinol dehydrogenase family. As to quaternary structure, homodimer. Zn(2+) is required as a cofactor.

It catalyses the reaction L-histidinol + 2 NAD(+) + H2O = L-histidine + 2 NADH + 3 H(+). It functions in the pathway amino-acid biosynthesis; L-histidine biosynthesis; L-histidine from 5-phospho-alpha-D-ribose 1-diphosphate: step 9/9. In terms of biological role, catalyzes the sequential NAD-dependent oxidations of L-histidinol to L-histidinaldehyde and then to L-histidine. This chain is Histidinol dehydrogenase, found in Salmonella paratyphi A (strain ATCC 9150 / SARB42).